A 615-amino-acid polypeptide reads, in one-letter code: Aspartokinase (615 aa).

Disordered regions lie at residues 84 to 105 and 127 to 171; these read ALQP…GTAT and SSVS…SISQ. Low complexity-rich tracts occupy residues 90–102 and 127–164; these read SSSG…SMSG and SSVS…ATPS. One can recognise an ACT domain in the interval 467-537; sequence IHSNRKTLSH…EVTVSKDMAI (71 aa).

The protein belongs to the aspartokinase family.

It catalyses the reaction L-aspartate + ATP = 4-phospho-L-aspartate + ADP. It functions in the pathway amino-acid biosynthesis; L-methionine biosynthesis via de novo pathway; L-homoserine from L-aspartate: step 1/3. Its pathway is amino-acid biosynthesis; L-threonine biosynthesis; L-threonine from L-aspartate: step 1/5. In terms of biological role, phosphorylates aspartate, the first step in the biosynthesis of amino acids that derive from aspartate (the aspartate family of amino acids), including methioinine and threonine, the latter of which is a precursor to isoleucine. In Cryptococcus neoformans var. grubii serotype A (strain H99 / ATCC 208821 / CBS 10515 / FGSC 9487) (Filobasidiella neoformans var. grubii), this protein is Aspartokinase.